The primary structure comprises 576 residues: Putative SPbeta prophage-derived single-strand DNA-specific exonuclease YorK (576 aa).

At Tyr-473 the chain carries Phosphotyrosine.

It belongs to the RecJ family.

In terms of biological role, putative single-stranded-DNA-specific exonuclease. In Bacillus subtilis (strain 168), this protein is Putative SPbeta prophage-derived single-strand DNA-specific exonuclease YorK (yorK).